Consider the following 60-residue polypeptide: UPF0509 protein ESA_01586 (60 aa).

Belongs to the UPF0509 family.

The polypeptide is UPF0509 protein ESA_01586 (Cronobacter sakazakii (strain ATCC BAA-894) (Enterobacter sakazakii)).